The sequence spans 310 residues: Apolipoprotein E (310 aa).

The first 18 residues, 1-18, serve as a signal peptide directing secretion; the sequence is MKVLWAALVVTLLAGCQA. A run of 4 repeats spans residues 77–98, 99–120, 121–142, and 143–164. The tract at residues 77–248 is 8 X 22 AA approximate tandem repeats; it reads ALMEETMKEV…RLDEVREQVQ (172 aa). Met-140 bears the Methionine sulfoxide mark. Ser-144 is subject to Phosphoserine. Residues 155 to 165 form an LDL and other lipoprotein receptors binding region; it reads HLRKLRKRLLR. 159–162 provides a ligand contact to heparin; sequence LRKR. A repeat spans 165–186; that stretch reads RDAEDLQKRLAVYQAGIREGAE. 3 repeat units span residues 187 to 204, 205 to 226, and 227 to 248. The interval 203–283 is lipid-binding and lipoprotein association; the sequence is AATVRSLISK…SWFEPLVQDM (81 aa). Residue 222–229 coordinates heparin; it reads GQRLRGRL. The tract at residues 259 to 310 is homooligomerization; it reads NQMRLQAEAFHARLKSWFEPLVQDMQQKWAELVEKVQLAVGTSPTSESSEKQ. The interval 271-283 is specificity for association with VLDL; it reads RLKSWFEPLVQDM.

This sequence belongs to the apolipoprotein A1/A4/E family. In terms of assembly, homotetramer. May interact with ABCA1; functionally associated with ABCA1 in the biogenesis of HDLs. May interact with APP/A4 amyloid-beta peptide; the interaction is extremely stable in vitro but its physiological significance is unclear. May interact with MAPT. May interact with MAP2. In the cerebrospinal fluid, interacts with secreted SORL1. Interacts with PMEL; this allows the loading of PMEL luminal fragment on ILVs to induce fibril nucleation. In terms of processing, APOE exists as multiple glycosylated and sialylated glycoforms within cells and in plasma. The extent of glycosylation and sialylation are tissue and context specific. Glycated in plasma VLDL. Post-translationally, phosphorylated by FAM20C in the extracellular medium.

Its subcellular location is the secreted. The protein localises to the extracellular space. The protein resides in the extracellular matrix. It localises to the extracellular vesicle. It is found in the endosome. Its subcellular location is the multivesicular body. Functionally, APOE is an apolipoprotein, a protein associating with lipid particles, that mainly functions in lipoprotein-mediated lipid transport between organs via the plasma and interstitial fluids. APOE is a core component of plasma lipoproteins and is involved in their production, conversion and clearance. Apolipoproteins are amphipathic molecules that interact both with lipids of the lipoprotein particle core and the aqueous environment of the plasma. As such, APOE associates with chylomicrons, chylomicron remnants, very low density lipoproteins (VLDL) and intermediate density lipoproteins (IDL) but shows a preferential binding to high-density lipoproteins (HDL). It also binds a wide range of cellular receptors including the LDL receptor/LDLR, the LDL receptor-related proteins LRP1, LRP2 and LRP8 and the very low-density lipoprotein receptor/VLDLR that mediate the cellular uptake of the APOE-containing lipoprotein particles. Finally, APOE also has a heparin-binding activity and binds heparan-sulfate proteoglycans on the surface of cells, a property that supports the capture and the receptor-mediated uptake of APOE-containing lipoproteins by cells. A main function of APOE is to mediate lipoprotein clearance through the uptake of chylomicrons, VLDLs, and HDLs by hepatocytes. APOE is also involved in the biosynthesis by the liver of VLDLs as well as their uptake by peripheral tissues ensuring the delivery of triglycerides and energy storage in muscle, heart and adipose tissues. By participating in the lipoprotein-mediated distribution of lipids among tissues, APOE plays a critical role in plasma and tissues lipid homeostasis. APOE is also involved in two steps of reverse cholesterol transport, the HDLs-mediated transport of cholesterol from peripheral tissues to the liver, and thereby plays an important role in cholesterol homeostasis. First, it is functionally associated with ABCA1 in the biogenesis of HDLs in tissues. Second, it is enriched in circulating HDLs and mediates their uptake by hepatocytes. APOE also plays an important role in lipid transport in the central nervous system, regulating neuron survival and sprouting. The protein is Apolipoprotein E (APOE) of Tapirus terrestris (Lowland tapir).